The sequence spans 155 residues: NSKKVVIAAVNGFALGGCELAMACDIRIASAKAKFGQPEVTLGITPGYGGTQRLTRLVGMAKAKELIFTGQVIKADEAEKIGLVNRVVEPDILIEEVEKLAKIIAKNAQLAVRYSKEAIQLGAQTDINTGIDIESNLFGLCFSTKDQKEGIVSFR.

It belongs to the enoyl-CoA hydratase/isomerase family.

It catalyses the reaction a short-chain (3S)-3-hydroxyacyl-CoA = a short-chain (2E)-enoyl-CoA + H2O. Its pathway is lipid metabolism; butanoate metabolism. This Clostridioides difficile (Peptoclostridium difficile) protein is Short-chain-enoyl-CoA hydratase (crt).